A 197-amino-acid polypeptide reads, in one-letter code: Guanylate kinase (197 aa).

Residues 9 to 188 enclose the Guanylate kinase-like domain; that stretch reads GRLVVFSAPS…AVEAVILAIS (180 aa). 16 to 23 provides a ligand contact to ATP; sequence APSGTGKS.

This sequence belongs to the guanylate kinase family.

It is found in the cytoplasm. The catalysed reaction is GMP + ATP = GDP + ADP. Essential for recycling GMP and indirectly, cGMP. The polypeptide is Guanylate kinase (Chlorobium luteolum (strain DSM 273 / BCRC 81028 / 2530) (Pelodictyon luteolum)).